The following is a 116-amino-acid chain: Phosphoribosyl-ATP pyrophosphatase (116 aa).

The protein belongs to the PRA-PH family.

It is found in the cytoplasm. The enzyme catalyses 1-(5-phospho-beta-D-ribosyl)-ATP + H2O = 1-(5-phospho-beta-D-ribosyl)-5'-AMP + diphosphate + H(+). Its pathway is amino-acid biosynthesis; L-histidine biosynthesis; L-histidine from 5-phospho-alpha-D-ribose 1-diphosphate: step 2/9. The sequence is that of Phosphoribosyl-ATP pyrophosphatase from Nitrobacter winogradskyi (strain ATCC 25391 / DSM 10237 / CIP 104748 / NCIMB 11846 / Nb-255).